The following is a 93-amino-acid chain: Acylphosphatase (93 aa).

Positions 7 to 93 (RAHVFVSGTV…EGIDGFHIRR (87 aa)) constitute an Acylphosphatase-like domain. Residues Arg-22 and Asn-40 contribute to the active site.

It belongs to the acylphosphatase family.

It catalyses the reaction an acyl phosphate + H2O = a carboxylate + phosphate + H(+). In Haloquadratum walsbyi (strain DSM 16790 / HBSQ001), this protein is Acylphosphatase (acyP).